Consider the following 520-residue polypeptide: D-aminopeptidase (520 aa).

S62 serves as the catalytic Nucleophile. Residue K65 is the Proton donor/acceptor of the active site. Residues 477–487 form an important for specificity region; that stretch reads QRSMDAPSPGE. Residue D481 coordinates substrate.

The protein belongs to the peptidase S12 family. In terms of assembly, homodimer.

The enzyme catalyses Release of an N-terminal D-amino acid from a peptide, Xaa-|-Yaa-, in which Xaa is preferably D-Ala, D-Ser or D-Thr. D-amino acid amides and methyl esters also are hydrolyzed, as is glycine amide.. With respect to regulation, inhibited by beta-lactam compounds such as 6-aminopenicillic acid, 7-aminocephalosporanic acid, benzylpenicillin and ampicillin. Inhibited by p-chloromercuribenzoate. In terms of biological role, hydrolyzes N-terminal residues in D-amino acid-containing peptides. The polypeptide is D-aminopeptidase (Brucella anthropi (strain ATCC 49188 / DSM 6882 / CCUG 24695 / JCM 21032 / LMG 3331 / NBRC 15819 / NCTC 12168 / Alc 37) (Ochrobactrum anthropi)).